The chain runs to 359 residues: 4-hydroxy-3-methylbut-2-en-1-yl diphosphate synthase (flavodoxin) (359 aa).

Residues Cys-264, Cys-267, Cys-299, and Glu-306 each contribute to the [4Fe-4S] cluster site.

The protein belongs to the IspG family. [4Fe-4S] cluster is required as a cofactor.

The catalysed reaction is (2E)-4-hydroxy-3-methylbut-2-enyl diphosphate + oxidized [flavodoxin] + H2O + 2 H(+) = 2-C-methyl-D-erythritol 2,4-cyclic diphosphate + reduced [flavodoxin]. It functions in the pathway isoprenoid biosynthesis; isopentenyl diphosphate biosynthesis via DXP pathway; isopentenyl diphosphate from 1-deoxy-D-xylulose 5-phosphate: step 5/6. Converts 2C-methyl-D-erythritol 2,4-cyclodiphosphate (ME-2,4cPP) into 1-hydroxy-2-methyl-2-(E)-butenyl 4-diphosphate. This chain is 4-hydroxy-3-methylbut-2-en-1-yl diphosphate synthase (flavodoxin), found in Helicobacter pylori (strain G27).